The chain runs to 740 residues: Probable RNA-dependent RNA polymerase 1 (740 aa).

The protein belongs to the RdRP family.

The enzyme catalyses RNA(n) + a ribonucleoside 5'-triphosphate = RNA(n+1) + diphosphate. Its function is as follows. Probably involved in the RNA silencing pathway and required for the generation of small interfering RNAs (siRNAs). The protein is Probable RNA-dependent RNA polymerase 1 (RDR1) of Oryza sativa subsp. japonica (Rice).